We begin with the raw amino-acid sequence, 315 residues long: Lipoyl synthase (315 aa).

Residues C62, C67, C73, C88, C92, C95, and S302 each coordinate [4Fe-4S] cluster. The region spanning 74 to 291 is the Radical SAM core domain; it reads FGKGTATFMI…ETEALAMGFK (218 aa).

The protein belongs to the radical SAM superfamily. Lipoyl synthase family. Requires [4Fe-4S] cluster as cofactor.

The protein localises to the cytoplasm. The catalysed reaction is [[Fe-S] cluster scaffold protein carrying a second [4Fe-4S](2+) cluster] + N(6)-octanoyl-L-lysyl-[protein] + 2 oxidized [2Fe-2S]-[ferredoxin] + 2 S-adenosyl-L-methionine + 4 H(+) = [[Fe-S] cluster scaffold protein] + N(6)-[(R)-dihydrolipoyl]-L-lysyl-[protein] + 4 Fe(3+) + 2 hydrogen sulfide + 2 5'-deoxyadenosine + 2 L-methionine + 2 reduced [2Fe-2S]-[ferredoxin]. It functions in the pathway protein modification; protein lipoylation via endogenous pathway; protein N(6)-(lipoyl)lysine from octanoyl-[acyl-carrier-protein]: step 2/2. Its function is as follows. Catalyzes the radical-mediated insertion of two sulfur atoms into the C-6 and C-8 positions of the octanoyl moiety bound to the lipoyl domains of lipoate-dependent enzymes, thereby converting the octanoylated domains into lipoylated derivatives. This Aromatoleum aromaticum (strain DSM 19018 / LMG 30748 / EbN1) (Azoarcus sp. (strain EbN1)) protein is Lipoyl synthase.